The following is a 439-amino-acid chain: Xylose isomerase (439 aa).

Residues histidine 101 and aspartate 104 contribute to the active site. 7 residues coordinate Mg(2+): glutamate 232, glutamate 268, histidine 271, aspartate 296, aspartate 307, aspartate 309, and aspartate 339.

It belongs to the xylose isomerase family. In terms of assembly, homotetramer. The cofactor is Mg(2+).

It localises to the cytoplasm. The catalysed reaction is alpha-D-xylose = alpha-D-xylulofuranose. The protein is Xylose isomerase of Marinomonas sp. (strain MWYL1).